The primary structure comprises 440 residues: Asparagine--tRNA ligase (440 aa).

This sequence belongs to the class-II aminoacyl-tRNA synthetase family. As to quaternary structure, homodimer.

The protein resides in the cytoplasm. The catalysed reaction is tRNA(Asn) + L-asparagine + ATP = L-asparaginyl-tRNA(Asn) + AMP + diphosphate + H(+). This is Asparagine--tRNA ligase from Chloroflexus aurantiacus (strain ATCC 29364 / DSM 637 / Y-400-fl).